Reading from the N-terminus, the 199-residue chain is Peroxisomal membrane protein PEX17 (199 aa).

The protein localises to the peroxisome membrane. Functionally, component of the peroxisomal translocation machinery with PEX13 and PEX14. Interacts indirectly with the PTS1 receptor (PAS10/PEX5) and directly binds to PEX14. Required for import of both PTS1 and PTS2 proteins. This is Peroxisomal membrane protein PEX17 (PEX17) from Saccharomyces cerevisiae (strain ATCC 204508 / S288c) (Baker's yeast).